The chain runs to 331 residues: 5,10-methylenetetrahydromethanopterin reductase (331 aa).

It belongs to the mer family.

It localises to the cytoplasm. The catalysed reaction is 5-methyl-5,6,7,8-tetrahydromethanopterin + oxidized coenzyme F420-(gamma-L-Glu)(n) + H(+) = 5,10-methylenetetrahydromethanopterin + reduced coenzyme F420-(gamma-L-Glu)(n). It participates in one-carbon metabolism; methanogenesis from CO(2); methyl-coenzyme M from 5,10-methylene-5,6,7,8-tetrahydromethanopterin: step 1/2. Functionally, catalyzes the reversible reduction of methylene-H(4)MPT to methyl-H(4)MPT. The polypeptide is 5,10-methylenetetrahydromethanopterin reductase (Methanocaldococcus jannaschii (strain ATCC 43067 / DSM 2661 / JAL-1 / JCM 10045 / NBRC 100440) (Methanococcus jannaschii)).